The primary structure comprises 239 residues: Ribonuclease PH (239 aa).

Phosphate is bound by residues arginine 86 and 124 to 126 (GTR).

The protein belongs to the RNase PH family. Homohexameric ring arranged as a trimer of dimers.

The catalysed reaction is tRNA(n+1) + phosphate = tRNA(n) + a ribonucleoside 5'-diphosphate. Phosphorolytic 3'-5' exoribonuclease that plays an important role in tRNA 3'-end maturation. Removes nucleotide residues following the 3'-CCA terminus of tRNAs; can also add nucleotides to the ends of RNA molecules by using nucleoside diphosphates as substrates, but this may not be physiologically important. Probably plays a role in initiation of 16S rRNA degradation (leading to ribosome degradation) during starvation. The chain is Ribonuclease PH from Rhizobium etli (strain CIAT 652).